The sequence spans 248 residues: Probable transcriptional regulatory protein PSPPH_3775 (248 aa).

This sequence belongs to the TACO1 family.

The protein resides in the cytoplasm. In Pseudomonas savastanoi pv. phaseolicola (strain 1448A / Race 6) (Pseudomonas syringae pv. phaseolicola (strain 1448A / Race 6)), this protein is Probable transcriptional regulatory protein PSPPH_3775.